The chain runs to 1118 residues: Cytospin-A (1118 aa).

The segment at 1 to 176 is disordered; sequence MKKASRSVGS…SKSKSDNQIS (176 aa). Residues 29 to 52 are compositionally biased toward polar residues; sequence ESGSSLSAVTKLSKPGTSASLLKT. A compositionally biased stretch (low complexity) spans 79 to 119; that stretch reads STCASTVSSTTGTTMSTLENKPRTVAGSTARRSTSSGTKES. 2 stretches are compositionally biased toward basic and acidic residues: residues 120-131 and 158-171; these read SSSRERIRDRSR and TNPE…KSKS. Positions 193 to 281 form a coiled coil; that stretch reads KTKDVEILHL…LNALGFSLEQ (89 aa). 2 disordered regions span residues 299 to 324 and 359 to 391; these read ITAG…GSME and SSDD…NASE. Low complexity predominate over residues 359 to 373; the sequence is SSDDALDAPSSSESE. 2 coiled-coil regions span residues 396–450 and 488–808; these read CLTE…MESL and RYME…RGRV. Disordered stretches follow at residues 856-879 and 921-1002; these read PSPA…PPAA and TSST…RKDP. The span at 937 to 946 shows a compositional bias: low complexity; it reads ESAKSISVSR. Residues 947 to 957 are compositionally biased toward basic and acidic residues; the sequence is RSSEEIKRDIS. Low complexity predominate over residues 972–991; sequence TTSPQLSLSSSPTASVTPTT. Residues 1012-1117 enclose the Calponin-homology (CH) domain; that stretch reads GSKRNALLKW…YVTAIYKYFE (106 aa).

Belongs to the cytospin-A family. As to quaternary structure, may interact with both microtubules and actin cytoskeleton.

The protein localises to the cytoplasm. It is found in the cytoskeleton. It localises to the spindle. Its subcellular location is the cell junction. The protein resides in the gap junction. Involved in cytokinesis and spindle organization. May play a role in actin cytoskeleton organization and microtubule stabilization and hence required for proper cell adhesion and migration. The protein is Cytospin-A (SPECC1L) of Gallus gallus (Chicken).